Consider the following 99-residue polypeptide: Plastocyanin (99 aa).

The region spanning 1–99 is the Plastocyanin-like domain; that stretch reads VEILLGGEDG…AGMVGKVTVN (99 aa). Cu cation contacts are provided by H37, C84, H87, and M92.

It belongs to the plastocyanin family. Cu(2+) serves as cofactor.

It localises to the plastid. It is found in the chloroplast thylakoid membrane. Its function is as follows. Participates in electron transfer between P700 and the cytochrome b6-f complex in photosystem I. The polypeptide is Plastocyanin (PETE) (Sambucus nigra (European elder)).